The following is a 282-amino-acid chain: NADPH-dependent 7-cyano-7-deazaguanine reductase (282 aa).

Residue 88–90 (IES) coordinates substrate. 90-91 (SK) contacts NADPH. The Thioimide intermediate role is filled by cysteine 190. Aspartate 197 (proton donor) is an active-site residue. 229–230 (HE) serves as a coordination point for substrate. Position 258–259 (258–259 (RG)) interacts with NADPH.

Belongs to the GTP cyclohydrolase I family. QueF type 2 subfamily. Homodimer.

Its subcellular location is the cytoplasm. The enzyme catalyses 7-aminomethyl-7-carbaguanine + 2 NADP(+) = 7-cyano-7-deazaguanine + 2 NADPH + 3 H(+). It participates in tRNA modification; tRNA-queuosine biosynthesis. Catalyzes the NADPH-dependent reduction of 7-cyano-7-deazaguanine (preQ0) to 7-aminomethyl-7-deazaguanine (preQ1). This is NADPH-dependent 7-cyano-7-deazaguanine reductase from Salmonella schwarzengrund (strain CVM19633).